The following is a 206-amino-acid chain: Na(+)-translocating NADH-quinone reductase subunit E (206 aa).

6 consecutive transmembrane segments (helical) span residues 12 to 32, 36 to 56, 85 to 105, 118 to 138, 148 to 168, and 184 to 204; these read AVFV…FLAV, ISSA…TVPV, FLGL…LEMF, GVFL…LFMV, VIYG…LAGI, and LGIT…FSGI.

Belongs to the NqrDE/RnfAE family. Composed of six subunits; NqrA, NqrB, NqrC, NqrD, NqrE and NqrF.

Its subcellular location is the cell inner membrane. The catalysed reaction is a ubiquinone + n Na(+)(in) + NADH + H(+) = a ubiquinol + n Na(+)(out) + NAD(+). NQR complex catalyzes the reduction of ubiquinone-1 to ubiquinol by two successive reactions, coupled with the transport of Na(+) ions from the cytoplasm to the periplasm. NqrA to NqrE are probably involved in the second step, the conversion of ubisemiquinone to ubiquinol. In Chromohalobacter salexigens (strain ATCC BAA-138 / DSM 3043 / CIP 106854 / NCIMB 13768 / 1H11), this protein is Na(+)-translocating NADH-quinone reductase subunit E.